The following is a 131-amino-acid chain: Cystatin-like cysteine protease inhibitor EPIC3 (131 aa).

Positions 1 to 22 are cleaved as a signal peptide; that stretch reads MAFTRSIALFAGLALAASSAQG. Asparagine 33 carries N-linked (GlcNAc...) asparagine glycosylation. The short motif at 71–75 is the Secondary area of contact element; sequence QTVAG.

Belongs to the cystatin family.

Its subcellular location is the secreted. Functionally, secreted effector that interacts with and inhibits host apoplastic pathogenesis-related papain-like cysteine proteases. Inhibition of host proteases by a pathogen extracellular protease inhibitor forms a specific type of defense-counterdefense mechanism between plants and microbial pathogens. The chain is Cystatin-like cysteine protease inhibitor EPIC3 from Phytophthora infestans (strain T30-4) (Potato late blight agent).